A 520-amino-acid chain; its full sequence is Cholesterol side-chain cleavage enzyme, mitochondrial (520 aa).

The N-terminal 39 residues, 1 to 39 (MLARGLPLRSALVKACPPLLNTGREGWGHHRVGTGEGAG), are a transit peptide targeting the mitochondrion. Positions 27–48 (WGHHRVGTGEGAGISTRTPRPY) are disordered. Cysteine 461 is a heme binding site.

It belongs to the cytochrome P450 family. In terms of assembly, interacts with FDX1/adrenodoxin. Requires heme as cofactor.

The protein localises to the mitochondrion inner membrane. It carries out the reaction 6 reduced [adrenodoxin] + cholesterol + 3 O2 + 6 H(+) = 4-methylpentanal + pregnenolone + 6 oxidized [adrenodoxin] + 4 H2O. The catalysed reaction is 2 reduced [adrenodoxin] + cholesterol + O2 + 2 H(+) = (22R)-hydroxycholesterol + 2 oxidized [adrenodoxin] + H2O. The enzyme catalyses (22R)-hydroxycholesterol + 2 reduced [adrenodoxin] + O2 + 2 H(+) = (20R,22R)-20,22-dihydroxycholesterol + 2 oxidized [adrenodoxin] + H2O. It catalyses the reaction (20R,22R)-20,22-dihydroxycholesterol + 2 reduced [adrenodoxin] + O2 + 2 H(+) = 4-methylpentanal + pregnenolone + 2 oxidized [adrenodoxin] + 2 H2O. It functions in the pathway lipid metabolism; C21-steroid hormone metabolism. Its pathway is steroid metabolism; cholesterol metabolism. In terms of biological role, a cytochrome P450 monooxygenase that catalyzes the side-chain hydroxylation and cleavage of cholesterol to pregnenolone, the precursor of most steroid hormones. Catalyzes three sequential oxidation reactions of cholesterol, namely the hydroxylation at C22 followed with the hydroxylation at C20 to yield 20R,22R-hydroxycholesterol that is further cleaved between C20 and C22 to yield the C21-steroid pregnenolone and 4-methylpentanal. Mechanistically, uses molecular oxygen inserting one oxygen atom into a substrate and reducing the second into a water molecule. Two electrons are provided by NADPH via a two-protein mitochondrial transfer system comprising flavoprotein FDXR (adrenodoxin/ferredoxin reductase) and nonheme iron-sulfur protein FDX1 or FDX2 (adrenodoxin/ferredoxin). This chain is Cholesterol side-chain cleavage enzyme, mitochondrial, found in Capra hircus (Goat).